The following is a 406-amino-acid chain: Arginine biosynthesis bifunctional protein ArgJ (406 aa).

Substrate contacts are provided by Thr-152, Lys-179, Thr-190, Glu-277, Asn-401, and Ser-406. The Nucleophile role is filled by Thr-190.

This sequence belongs to the ArgJ family. Heterotetramer of two alpha and two beta chains.

Its subcellular location is the cytoplasm. The enzyme catalyses N(2)-acetyl-L-ornithine + L-glutamate = N-acetyl-L-glutamate + L-ornithine. It catalyses the reaction L-glutamate + acetyl-CoA = N-acetyl-L-glutamate + CoA + H(+). It functions in the pathway amino-acid biosynthesis; L-arginine biosynthesis; L-ornithine and N-acetyl-L-glutamate from L-glutamate and N(2)-acetyl-L-ornithine (cyclic): step 1/1. Its pathway is amino-acid biosynthesis; L-arginine biosynthesis; N(2)-acetyl-L-ornithine from L-glutamate: step 1/4. Its function is as follows. Catalyzes two activities which are involved in the cyclic version of arginine biosynthesis: the synthesis of N-acetylglutamate from glutamate and acetyl-CoA as the acetyl donor, and of ornithine by transacetylation between N(2)-acetylornithine and glutamate. In Neisseria gonorrhoeae (strain ATCC 700825 / FA 1090), this protein is Arginine biosynthesis bifunctional protein ArgJ.